We begin with the raw amino-acid sequence, 396 residues long: Inositol hexakisphosphate kinase 3 (396 aa).

Proline 206 to glycine 214 contacts substrate.

Belongs to the inositol phosphokinase (IPK) family. As to expression, highly expressed in cerebellum, brain cortex, kidney, thymus and lung. Detected at lower levels in hippocampus, testis, heart and olfactory bulb.

The protein resides in the cytoplasm. The enzyme catalyses 1D-myo-inositol hexakisphosphate + ATP = 5-diphospho-1D-myo-inositol 1,2,3,4,6-pentakisphosphate + ADP. The catalysed reaction is 1-diphospho-1D-myo-inositol 2,3,4,5,6-pentakisphosphate + ATP + H(+) = 1,5-bis(diphospho)-1D-myo-inositol 2,3,4,6-tetrakisphosphate + ADP. Functionally, converts inositol hexakisphosphate (InsP6) to diphosphoinositol pentakisphosphate (InsP7/PP-InsP5). Converts 1,3,4,5,6-pentakisphosphate (InsP5) to PP-InsP4. The polypeptide is Inositol hexakisphosphate kinase 3 (Ip6k3) (Mus musculus (Mouse)).